We begin with the raw amino-acid sequence, 169 residues long: Ribosome maturation factor RimM (169 aa).

A PRC barrel domain is found at 94–167 (ENEFYFHEII…KITIEVMEGL (74 aa)).

The protein belongs to the RimM family. In terms of assembly, binds ribosomal protein uS19.

The protein localises to the cytoplasm. Functionally, an accessory protein needed during the final step in the assembly of 30S ribosomal subunit, possibly for assembly of the head region. Essential for efficient processing of 16S rRNA. May be needed both before and after RbfA during the maturation of 16S rRNA. It has affinity for free ribosomal 30S subunits but not for 70S ribosomes. This Listeria monocytogenes serotype 4b (strain F2365) protein is Ribosome maturation factor RimM.